The chain runs to 232 residues: MNRKASVSKELNAKHSKILEALLKHPDNRECADCRSKAPRWASVNLGIFICMQCSGIHRSLGVHISQVRSITLDTWLPDQVAFMKSTGNAKGNEYWESELPQHFERSSSDTFIRAKYSEKRWVSPGAIQPAPIVSQLSCKVSHLVESGYKPETPKKARTLSLDEEILLHHVLQVTPPETRTRAGSVDMKENVYVVPLPEFKKPNQKNENFSSEVNQNRRTTIAPPSSWATFD.

An Arf-GAP domain is found at 16-130 (SKILEALLKH…RWVSPGAIQP (115 aa)). The C4-type zinc finger occupies 31 to 54 (CADCRSKAPRWASVNLGIFICMQC). Residues 203-232 (PNQKNENFSSEVNQNRRTTIAPPSSWATFD) are disordered. Residues 206-232 (KNENFSSEVNQNRRTTIAPPSSWATFD) are compositionally biased toward polar residues.

Its function is as follows. GTPase-activating protein (GAP) for ADP ribosylation factor (ARF). The protein is Probable ADP-ribosylation factor GTPase-activating protein AGD15 (AGD15) of Arabidopsis thaliana (Mouse-ear cress).